The primary structure comprises 60 residues: Temporin-CG2 (60 aa).

The first 22 residues, 1–22 (MFTLKKPLLVLFFLATINLSLC), serve as a signal peptide directing secretion. Positions 23 to 43 (EQERNAEEERRDDDERNVEVE) are cleaved as a propeptide — removed in mature form.

As to expression, expressed by the skin glands.

It is found in the secreted. In terms of biological role, antimicrobial peptide active against a variety of Gram-positive bacterial strains but not against Gram-negative bacteria. Has weak antifungal activity against a slime mold isolate. Has weak hemolytic activity against human erythrocytes. The chain is Temporin-CG2 from Amolops chunganensis (Chungan torrent frog).